The chain runs to 249 residues: 4-hydroxy-tetrahydrodipicolinate reductase (249 aa).

NAD(+) contacts are provided by residues Asp32, 74–76 (GTT), and 99–102 (SANY). The active-site Proton donor/acceptor is His134. His135 lines the (S)-2,3,4,5-tetrahydrodipicolinate pocket. Lys138 functions as the Proton donor in the catalytic mechanism. 144 to 145 (GT) is a (S)-2,3,4,5-tetrahydrodipicolinate binding site.

This sequence belongs to the DapB family.

Its subcellular location is the cytoplasm. The enzyme catalyses (S)-2,3,4,5-tetrahydrodipicolinate + NAD(+) + H2O = (2S,4S)-4-hydroxy-2,3,4,5-tetrahydrodipicolinate + NADH + H(+). The catalysed reaction is (S)-2,3,4,5-tetrahydrodipicolinate + NADP(+) + H2O = (2S,4S)-4-hydroxy-2,3,4,5-tetrahydrodipicolinate + NADPH + H(+). It participates in amino-acid biosynthesis; L-lysine biosynthesis via DAP pathway; (S)-tetrahydrodipicolinate from L-aspartate: step 4/4. Catalyzes the conversion of 4-hydroxy-tetrahydrodipicolinate (HTPA) to tetrahydrodipicolinate. In Chlorobaculum tepidum (strain ATCC 49652 / DSM 12025 / NBRC 103806 / TLS) (Chlorobium tepidum), this protein is 4-hydroxy-tetrahydrodipicolinate reductase.